The sequence spans 219 residues: Pollen-specific protein SF3 (219 aa).

2 consecutive LIM zinc-binding domains span residues 9–109 (QKCT…TRDK) and 110–167 (CNAC…QLFK). The interval 181–219 (VAAPAESETQNTETQNAETQNADTQNADTQNTETQNGSV) is disordered. Residues 185-202 (AESETQNTETQNAETQNA) show a composition bias toward low complexity. Over residues 203–219 (DTQNADTQNTETQNGSV) the composition is skewed to polar residues.

Pollen.

Its function is as follows. Could possibly involved in controlling pollen-specific processes such as male gamete maturation, pollen tube formation, or even fertilization. This chain is Pollen-specific protein SF3 (SF3), found in Helianthus annuus (Common sunflower).